We begin with the raw amino-acid sequence, 68 residues long: Large ribosomal subunit protein bL35 (68 aa).

It belongs to the bacterial ribosomal protein bL35 family.

This chain is Large ribosomal subunit protein bL35, found in Onion yellows phytoplasma (strain OY-M).